We begin with the raw amino-acid sequence, 162 residues long: UPF0114 protein VCM66_0196 (162 aa).

4 helical membrane passes run 15 to 35 (IMAP…IKFF), 53 to 73 (LILV…IVMV), 109 to 126 (VSAS…KVFM), and 136 to 156 (IKWY…MGYL).

It belongs to the UPF0114 family.

The protein localises to the cell membrane. This Vibrio cholerae serotype O1 (strain M66-2) protein is UPF0114 protein VCM66_0196.